The sequence spans 465 residues: 5'-adenylylsulfate reductase 1, chloroplastic (465 aa).

A chloroplast-targeting transit peptide spans 1-53 (MAMSVNVSSSSSSGIINSRFGVSLEPKVSQIGSLRLLDRVHVAPVSLNLSGKR). Positions 73-327 (LAATMVAEIA…KAKECGLHKG (255 aa)) are reductase domain. The region spanning 344 to 465 (SAVADIFKSE…SLTSFLNLVR (122 aa)) is the Thioredoxin domain. Active-site nucleophile residues include Cys385 and Cys388. Residues Cys385 and Cys388 are joined by a disulfide bond.

Belongs to the APS reductase family. It depends on [4Fe-4S] cluster as a cofactor. In terms of tissue distribution, leaves, roots and stem.

The protein resides in the plastid. It is found in the chloroplast. The catalysed reaction is glutathione disulfide + sulfite + AMP + 2 H(+) = adenosine 5'-phosphosulfate + 2 glutathione. Its activity is regulated as follows. Stimulated by sodium sulfate &gt; ammonium sulfate and is sensitive to inactivation by 5'AMP. Its function is as follows. Reduces sulfate for Cys biosynthesis. Substrate preference is adenosine-5'-phosphosulfate (APS) &gt;&gt; 3'-phosphoadenosine-5'-phosphosulfate (PAPS). Uses glutathione or DTT as source of protons. The protein is 5'-adenylylsulfate reductase 1, chloroplastic (APR1) of Arabidopsis thaliana (Mouse-ear cress).